Here is a 63-residue protein sequence, read N- to C-terminus: Prokaryotic ubiquitin-like protein Pup 1 (63 aa).

2 stretches are compositionally biased toward basic and acidic residues: residues 1-12 (MSQEKVQRHGGG) and 24-33 (GQERREKLGE). The disordered stretch occupies residues 1–35 (MSQEKVQRHGGGDGEEESGPEAAGQERREKLGEDV). Positions 20–57 (PEAAGQERREKLGEDVDAILDEIDDVLEENAEDFVRAY) are ARC ATPase binding. A coiled-coil region spans residues 25–51 (QERREKLGEDVDAILDEIDDVLEENAE). Deamidated glutamine is present on glutamine 63. Glutamine 63 participates in a covalent cross-link: Isoglutamyl lysine isopeptide (Gln-Lys) (interchain with K-? in acceptor proteins).

It belongs to the prokaryotic ubiquitin-like protein family. Strongly interacts with the proteasome-associated ATPase ARC through a hydrophobic interface; the interacting region of Pup lies in its C-terminal half. There is one Pup binding site per ARC hexamer ring. Is modified by deamidation of its C-terminal glutamine to glutamate by the deamidase Dop, a prerequisite to the subsequent pupylation process.

It participates in protein degradation; proteasomal Pup-dependent pathway. Functionally, protein modifier that is covalently attached to lysine residues of substrate proteins, thereby targeting them for proteasomal degradation. The tagging system is termed pupylation. This is Prokaryotic ubiquitin-like protein Pup 1 from Saccharopolyspora erythraea (strain ATCC 11635 / DSM 40517 / JCM 4748 / NBRC 13426 / NCIMB 8594 / NRRL 2338).